A 385-amino-acid polypeptide reads, in one-letter code: Putative F-box protein At1g47765 (385 aa).

Residues methionine 1 to glutamine 19 are compositionally biased toward basic residues. Residues methionine 1–serine 24 are disordered. The region spanning serine 20 to arginine 69 is the F-box domain.

This Arabidopsis thaliana (Mouse-ear cress) protein is Putative F-box protein At1g47765.